The following is a 359-amino-acid chain: Guanine nucleotide-binding protein subunit alpha-11 (359 aa).

S-palmitoyl cysteine attachment occurs at residues Cys9 and Cys10. The 322-residue stretch at 38 to 359 folds into the G-alpha domain; it reads RELKLLLLGT…QLNLKEYNLV (322 aa). The interval 41–54 is G1 motif; that stretch reads KLLLLGTGESGKST. GTP-binding positions include 46-53 and 180-183; these read GTGESGKS and LRVR. Ser53 serves as a coordination point for Mg(2+). Positions 178-186 are G2 motif; that stretch reads DVLRVRVPT. Thr186 is a binding site for Mg(2+). The tract at residues 201–210 is G3 motif; that stretch reads FRMVDVGGQR. Residues 270-277 form a G4 motif region; that stretch reads ILFLNKKD. GTP-binding positions include 274–277 and Ala331; that span reads NKKD. Residues 329-334 are G5 motif; sequence TCATDT.

This sequence belongs to the G-alpha family. G(q) subfamily. G proteins are composed of 3 units; alpha, beta and gamma. The alpha chain contains the guanine nucleotide binding site. Interacts with RGS22. Interacts with NTSR1.

The protein resides in the cell membrane. The protein localises to the cytoplasm. It catalyses the reaction GTP + H2O = GDP + phosphate + H(+). Its function is as follows. Guanine nucleotide-binding proteins (G proteins) function as transducers downstream of G protein-coupled receptors (GPCRs) in numerous signaling cascades. The alpha chain contains the guanine nucleotide binding site and alternates between an active, GTP-bound state and an inactive, GDP-bound state. Signaling by an activated GPCR promotes GDP release and GTP binding. The alpha subunit has a low GTPase activity that converts bound GTP to GDP, thereby terminating the signal. Both GDP release and GTP hydrolysis are modulated by numerous regulatory proteins. Signaling is mediated via phospholipase C-beta-dependent inositol lipid hydrolysis for signal propagation: activates phospholipase C-beta: following GPCR activation, GNA11 activates PLC-beta (PLCB1, PLCB2, PLCB3 or PLCB4), leading to production of diacylglycerol (DAG) and inositol 1,4,5-trisphosphate (IP3). Transduces FFAR4 signaling in response to long-chain fatty acids (LCFAs). Together with GNAQ, required for heart development. In the respiratory epithelium, transmits OXGR1-dependent signals that lead to downstream intracellular Ca(2+) release and mucocilliary clearance of airborne pathogens. This Bos taurus (Bovine) protein is Guanine nucleotide-binding protein subunit alpha-11 (GNA11).